The sequence spans 600 residues: NADH-quinone oxidoreductase subunit C/D (600 aa).

Residues 1 to 190 are NADH dehydrogenase I subunit C; the sequence is MVNNMTDLTA…DPFELTKAKQ (190 aa). Residues 214–600 are NADH dehydrogenase I subunit D; the sequence is DFMFLNLGPN…IDFVMSDVDR (387 aa).

The protein in the N-terminal section; belongs to the complex I 30 kDa subunit family. It in the C-terminal section; belongs to the complex I 49 kDa subunit family. As to quaternary structure, NDH-1 is composed of 13 different subunits. Subunits NuoB, CD, E, F, and G constitute the peripheral sector of the complex.

It is found in the cell inner membrane. The enzyme catalyses a quinone + NADH + 5 H(+)(in) = a quinol + NAD(+) + 4 H(+)(out). Functionally, NDH-1 shuttles electrons from NADH, via FMN and iron-sulfur (Fe-S) centers, to quinones in the respiratory chain. The immediate electron acceptor for the enzyme in this species is believed to be ubiquinone. Couples the redox reaction to proton translocation (for every two electrons transferred, four hydrogen ions are translocated across the cytoplasmic membrane), and thus conserves the redox energy in a proton gradient. The chain is NADH-quinone oxidoreductase subunit C/D from Salmonella arizonae (strain ATCC BAA-731 / CDC346-86 / RSK2980).